The following is an 817-amino-acid chain: Protein hunchback (817 aa).

Disordered regions lie at residues P51–L77, H93–A132, and Y187–D252. The segment covering Q62–P76 has biased composition (low complexity). Positions F103–G119 are enriched in polar residues. Low complexity predominate over residues Q189–Q201. C2H2-type zinc fingers lie at residues H287–H309, L316–H338, F344–H366, and Y372–H396. Disordered stretches follow at residues P456–A477, Q491–Q513, Q564–P619, and A666–S758. Residues Q564 to E576 are compositionally biased toward low complexity. Over residues N577 to F595 the composition is skewed to acidic residues. Polar residues predominate over residues M680–N694. A compositionally biased stretch (low complexity) spans P721–S758. C2H2-type zinc fingers lie at residues Y764–H786 and F792–H816.

This sequence belongs to the hunchback C2H2-type zinc-finger protein family.

It is found in the nucleus. In terms of biological role, gap class segmentation protein that controls development of head structures. The chain is Protein hunchback (hb) from Musca domestica (House fly).